A 256-amino-acid chain; its full sequence is Thiazole synthase (256 aa).

Lysine 96 functions as the Schiff-base intermediate with DXP in the catalytic mechanism. 1-deoxy-D-xylulose 5-phosphate contacts are provided by residues glycine 157, 183 to 184, and 205 to 206; these read AG and NT.

The protein belongs to the ThiG family. In terms of assembly, homotetramer. Forms heterodimers with either ThiH or ThiS.

The protein localises to the cytoplasm. It carries out the reaction [ThiS sulfur-carrier protein]-C-terminal-Gly-aminoethanethioate + 2-iminoacetate + 1-deoxy-D-xylulose 5-phosphate = [ThiS sulfur-carrier protein]-C-terminal Gly-Gly + 2-[(2R,5Z)-2-carboxy-4-methylthiazol-5(2H)-ylidene]ethyl phosphate + 2 H2O + H(+). It participates in cofactor biosynthesis; thiamine diphosphate biosynthesis. Functionally, catalyzes the rearrangement of 1-deoxy-D-xylulose 5-phosphate (DXP) to produce the thiazole phosphate moiety of thiamine. Sulfur is provided by the thiocarboxylate moiety of the carrier protein ThiS. In vitro, sulfur can be provided by H(2)S. The protein is Thiazole synthase of Clostridium beijerinckii (strain ATCC 51743 / NCIMB 8052) (Clostridium acetobutylicum).